An 890-amino-acid chain; its full sequence is Potassium/sodium hyperpolarization-activated cyclic nucleotide-gated channel 1 (890 aa).

The disordered stretch occupies residues 1 to 93; that stretch reads MEGGGKPNSS…AEGPRRQYGF (93 aa). Residues 1–142 are Cytoplasmic-facing; the sequence is MEGGGKPNSS…WIIHPYSDFR (142 aa). Positions 8-34 are enriched in low complexity; the sequence is NSSSNSRDDGNSVFPAKASATGAGPAA. The span at 62–77 shows a compositional bias: gly residues; it reads DGGGGGGGGGGGGEEP. A helical transmembrane segment spans residues 143–164; the sequence is FYWDLIMLIMMVGNLVIIPVGI. Over 165–173 the chain is Extracellular; the sequence is TFFTEQTTT. Residues 174–194 form a helical membrane-spanning segment; sequence PWIIFNVASDTVFLLDLIMNF. Over 195–215 the chain is Cytoplasmic; the sequence is RTGTVNEDSSEIILDPKVIKM. A helical membrane pass occupies residues 216-236; it reads NYLKSWFVVDFISSIPVDYIF. Residues 237 to 260 are Extracellular-facing; sequence LIVEKGMDSEVYKTARALRIVRFT. The chain crosses the membrane as a helical; Voltage-sensor span at residues 261–281; it reads KILSLLRLLRLSRLIRYIHQW. Residues 282-295 lie on the Cytoplasmic side of the membrane; the sequence is EEIFHMTYDLASAV. A helical membrane pass occupies residues 296–318; sequence VRIFNLIGMMLLLCHWDGCLQFL. The Extracellular portion of the chain corresponds to 319 to 344; that stretch reads VPLLQDFPPDCWVSLNEMVNDSWGKQ. N-linked (GlcNAc...) asparagine glycosylation is present at N338. The segment at residues 345–366 is an intramembrane region (pore-forming); it reads YSYALFKAMSHMLCIGYGAQAP. The Selectivity filter signature appears at 358-362; that stretch reads CIGYG. Topologically, residues 367–371 are extracellular; sequence VSMSD. A helical membrane pass occupies residues 372–392; sequence LWITMLSMIVGATCYAMFVGH. Over 393–890 the chain is Cytoplasmic; sequence ATALIQSLDS…AEKPRFASNL (498 aa). 3',5'-cyclic AMP is bound by residues G539, E540, C542, R549, T550, R590, and R593. Low complexity-rich tracts occupy residues 644–691 and 731–749; these read MTTL…PQPS and QQQPQQQVQQSQPPQTQPQ. Disordered regions lie at residues 644-692, 725-796, and 845-890; these read MTTL…QPSA, SQLS…LPHE, and MSSG…ASNL. The segment covering 770–780 has biased composition (polar residues); the sequence is STQALHNTNLT. A compositionally biased stretch (pro residues) spans 854–865; it reads RGVPPAPPPPAA. Positions 880 to 890 are enriched in basic and acidic residues; the sequence is DAEKPRFASNL.

This sequence belongs to the potassium channel HCN family. In terms of assembly, homotetramer. Heterotetramer with HCN2. The potassium channel is composed of a homo- or heterotetrameric complex of pore-forming subunits. Interacts with KCNE2. Interacts with the SH3 domain of CSK. In terms of tissue distribution, detected in brain, in particular in amygdala and hippocampus, while expression in caudate nucleus, corpus callosum, substantia nigra, subthalamic nucleus and thalamus is very low or not detectable. Detected at very low levels in muscle and pancreas.

Its subcellular location is the cell membrane. The enzyme catalyses Na(+)(in) = Na(+)(out). It carries out the reaction K(+)(in) = K(+)(out). Its activity is regulated as follows. Activated by cAMP, and at 10-100 times higher concentrations, also by cGMP. cAMP binding promotes tetramerization and formation of an active channel. Compared to other family members, cAMP has less stimulatory effect on HCN1 because part of the molecules already contain bound cAMP and form homotetramers when cAMP levels are low, this inherent tetramerization in HCN1 results in a weaker response to increased cAMP. Inhibited by Cs(1+), zatebradine, capsazepine and ZD7288. Its function is as follows. Hyperpolarization-activated ion channel that are permeable to sodium and potassium ions. Displays lower selectivity for K(+) over Na(+) ions. Contributes to the native pacemaker currents in heart (If) and in the generation of the I(h) current which controls neuron excitability. Participates in cerebellar mechanisms of motor learning. May mediate responses to sour stimuli. The protein is Potassium/sodium hyperpolarization-activated cyclic nucleotide-gated channel 1 (HCN1) of Homo sapiens (Human).